A 385-amino-acid polypeptide reads, in one-letter code: ELAV-like protein 4 (385 aa).

A disordered region spans residues 12-48 (TMEPQVSNGPTSNTSNGPSSNNRNCPSPMQTGAATDD). Positions 18 to 33 (SNGPTSNTSNGPSSNN) are enriched in low complexity. A compositionally biased stretch (polar residues) spans 34-44 (RNCPSPMQTGA). Ser38 is modified (phosphoserine). RRM domains lie at 51–129 (TNLI…YARP) and 137–217 (ANLY…FANN). At Ser233 the chain carries Phosphoserine. An Asymmetric dimethylarginine; by CARM1; alternate modification is found at Arg248. Position 248 is an omega-N-methylarginine; by CARM1; alternate (Arg248). The RRM 3 domain occupies 302–380 (WCIFVYNLSP…RVLQVSFKTN (79 aa)).

This sequence belongs to the RRM elav family. In terms of assembly, component of a TAU mRNP complex, at least composed of IGF2BP1, ELAVL4 and G3BP. Associates with the EIF4F cap-binding complex, composed of EIF4G, EIF4A, EIF4E and PABP. Within the EIF4F cap-binding complex, interacts with EIF4A. Interacts with SMN (via Tudor domain) in an RNA-independent manner; the interaction is required for localization of ELAVL4 to RNA granules. Interacts with MAP1 light chain LC1 (via C-terminus); the interaction contributes to the association of ELAVL4 with microtubules. Interacts with MAP1 light chain LC2. In terms of processing, methylated by CARM1, which leads to reduced RNA-binding activity and enhanced interaction with SMN. Methylation at Arg-248 by CARM1 weakens protective binding to the 3'UTR of CDKN1A mRNA and down-regulates CDKN1A protein expression, thereby maintaining cells in a proliferative state. Methylation is inhibited by NGF, which facilitates neurite outgrowth. In terms of tissue distribution, expressed in the brain, including the hippocampus, and in pancreatic beta cells (at protein level). Expressed in pyramidal neurons of the hippocampal CA3 and CA1 region and in the hilus but not in dentate granule cells (at protein level). Expressed in the dorsal root ganglion and the spinal cord (at protein level). Expressed in neural stem and progenitor cells (at protein level). Expressed in radial glia-like cells and in transient amplifying cells in the subventricular zone (SVZ), and in immature neurons both in the SVZ and the rostral migratory stream as well as in mature neurons in the olfactory bulb (at protein level). Expressed in testis and in the brain, including the hippocampus, the neocortex and the cerebellum. Expressed in lower- but not upper-layer primary neurons of the mature neocortex, in the hippocampal regions CA1-3 and the dentate gyrus. Expressed in the mitral and granule cells of the olfactory bulb, cerebral cortex, entorhinal cortex, thalamus, medial habenula, amygdala, granule cells of the cerebellum, pons, olivary nucleus, dorsal and ventral spinal cord and in dorsal root ganglia. Expressed in motor neurons. Isoform 4: Expressed in the brain. Isoform 5: Expressed in the brain. Isoform 6: Expressed in the brain. Isoform 7: Expressed in the brain. Isoform 8: Expressed in the brain. Isoform 9: Expressed in the brain. Isoform 10: Expressed in the brain. Isoform 11: Expressed in the brain.

It localises to the cytoplasm. The protein localises to the perikaryon. It is found in the cell projection. The protein resides in the dendrite. Its subcellular location is the axon. It localises to the growth cone. RNA-binding protein that is involved in the post-transcriptional regulation of mRNAs. Plays a role in the regulation of mRNA stability, alternative splicing and translation. Binds to AU-rich element (ARE) sequences in the 3' untranslated region (3'UTR) of target mRNAs, including GAP43, VEGF, FOS, CDKN1A and ACHE mRNA. Many of the target mRNAs are coding for RNA-binding proteins, transcription factors and proteins involved in RNA processing and/or neuronal development and function. By binding to the mRNA 3'UTR, decreases mRNA deadenylation and thereby contributes to the stabilization of mRNA molecules and their protection from decay. Also binds to the polyadenylated (poly(A)) tail in the 3'UTR of mRNA, thereby increasing its affinity for mRNA binding. Mainly plays a role in neuron-specific RNA processing by stabilization of mRNAs such as GAP43, ACHE and mRNAs of other neuronal proteins, thereby contributing to the differentiation of neural progenitor cells, nervous system development, learning and memory mechanisms. Involved in the negative regulation of the proliferative activity of neuronal stem cells and in the positive regulation of neuronal differentiation of neural progenitor cells. Promotes neuronal differentiation of neural stem/progenitor cells in the adult subventricular zone of the hippocampus by binding to and stabilizing SATB1 mRNA. Binds and stabilizes MSI1 mRNA in neural stem cells. Exhibits increased binding to ACHE mRNA during neuronal differentiation, thereby stabilizing ACHE mRNA and enhancing its expression. Protects CDKN1A mRNA from decay by binding to its 3'-UTR. May bind to APP and BACE1 mRNAS and the BACE1AS lncRNA and enhance their stabilization. Plays a role in neurite outgrowth and in the establishment and maturation of dendritic arbors, thereby contributing to neocortical and hippocampal circuitry function. Stabilizes GAP43 mRNA and protects it from decay during postembryonic development in the brain. By promoting the stabilization of GAP43 mRNA, plays a role in NGF-mediated neurite outgrowth. Binds to BDNF long 3'UTR mRNA, thereby leading to its stabilization and increased dendritic translation after activation of PKC. By increasing translation of BDNF after nerve injury, may contribute to nerve regeneration. Acts as a stabilizing factor by binding to the 3'UTR of NOVA1 mRNA, thereby increasing its translation and enhancing its functional activity in neuron-specific splicing. Stimulates translation of mRNA in a poly(A)- and cap-dependent manner, possibly by associating with the EIF4F cap-binding complex. May also negatively regulate translation by binding to the 5'UTR of Ins2 mRNA, thereby repressing its translation. Upon glucose stimulation, Ins2 mRNA is released from ELAVL4 and translational inhibition is abolished. Also plays a role in the regulation of alternative splicing. May regulate alternative splicing of CALCA pre-mRNA into Calcitonin and Calcitonin gene-related peptide 1 (CGRP) by competing with splicing regulator TIAR for binding to U-rich sequences of CALCA pre-mRNA. This chain is ELAV-like protein 4 (Elavl4), found in Mus musculus (Mouse).